The chain runs to 361 residues: KDEL-tailed cysteine endopeptidase CEP2 (361 aa).

Positions 1–20 (MKKLLLIFLFSLVILQTACG) are cleaved as a signal peptide. A propeptide spans 21–127 (FDYDDKEIES…FMYDHENLSK (107 aa)) (activation peptide). N-linked (GlcNAc...) asparagine glycans are attached at residues Asn75 and Asn124. Disulfide bonds link Cys149–Cys191, Cys183–Cys224, and Cys282–Cys333. Cys152 is an active-site residue. Catalysis depends on residues His288 and Asn308. Residues 358–361 (KDEL) carry the Prevents secretion from ER motif.

It belongs to the peptidase C1 family. Expressed in roots, stems, rosette and cauline leaves, flowers, buds and green siliques. Found in the tip of young primary leaves, in very young root tips and at later stages in all tissues of lateral root, including the vascular bundle. Not expressed in lateral root primordia, while directly emerging through the epidermis.

It localises to the endoplasmic reticulum. Its function is as follows. Involved in the final stage of developmental programmed cell death and in intercalation of new cells. Cleaves extensins, thus probably supporting the final cell collapse. The protein is KDEL-tailed cysteine endopeptidase CEP2 of Arabidopsis thaliana (Mouse-ear cress).